Consider the following 176-residue polypeptide: MTMCSGARLALLVYGIIMHSSVYCSPAAAGLRFPGIRPEDEAYDEDGNPLQDFYDSDPPGVGGPASTLRDAYALYYPAEERDVAHGILNKAYRKVLDQLSARKYLQTLMAKSVGGNLDGGAEDDSEPLSKRHSDGIFTDSYSRYRKQMAVKKYLAAVLGKRYKQRVKNKGRRIAYL.

An N-terminal signal peptide occupies residues 1 to 24; it reads MTMCSGARLALLVYGIIMHSSVYC. The propeptide occupies 25 to 80; it reads SPAAAGLRFPGIRPEDEAYDEDGNPLQDFYDSDPPGVGGPASTLRDAYALYYPAEE. The important for receptor binding stretch occupies residues 150–158; sequence VKKYLAAVL. Residue L158 is modified to Leucine amide. K169 carries the lysine amide modification. The propeptide occupies 173–176; the sequence is IAYL.

The protein belongs to the glucagon family.

It is found in the secreted. Functionally, PACAP is a neuropeptide involved in diverse array of physiological processes through activating the PACAP subfamily of class B1 G protein-coupled receptors: VIP receptor 1 (VIPR1), VIP receptor 2 (VIPR2), and PACAP type I receptor (ADCYAP1R1). Exerts neuroprotective and general cytoprotective effects due to anti-apoptotic, anti-inflammatory, and antioxidant actions. Promotes neuron projection development through the RAPGEF2/Rap1/B-Raf/ERK pathway. In chromaffin cells, induces long-lasting increase of intracellular calcium concentrations and neuroendocrine secretion. Involved in the control of glucose homeostasis, induces insulin secretion by pancreatic beta cells. PACAP exists in two bioactive forms from proteolysis of the same precursor protein, PACAP27 and PACAP38, which differ by eleven amino acid residues in the C-terminus. The protein is Pituitary adenylate cyclase-activating polypeptide (ADCYAP1) of Sus scrofa (Pig).